The chain runs to 184 residues: Protein GrpE (184 aa).

The segment covering 1–10 has biased composition (basic and acidic residues); it reads MSQETEKDLE. Positions 1–38 are disordered; it reads MSQETEKDLEQTQNEELVEEAQSDEKKDQEVDPVEAAQ.

The protein belongs to the GrpE family. As to quaternary structure, homodimer.

Its subcellular location is the cytoplasm. Its function is as follows. Participates actively in the response to hyperosmotic and heat shock by preventing the aggregation of stress-denatured proteins, in association with DnaK and GrpE. It is the nucleotide exchange factor for DnaK and may function as a thermosensor. Unfolded proteins bind initially to DnaJ; upon interaction with the DnaJ-bound protein, DnaK hydrolyzes its bound ATP, resulting in the formation of a stable complex. GrpE releases ADP from DnaK; ATP binding to DnaK triggers the release of the substrate protein, thus completing the reaction cycle. Several rounds of ATP-dependent interactions between DnaJ, DnaK and GrpE are required for fully efficient folding. The polypeptide is Protein GrpE (Sulfurovum sp. (strain NBC37-1)).